Reading from the N-terminus, the 80-residue chain is Defensin-like protein 17 (80 aa).

Residues 1–29 form the signal peptide; sequence MAKSATIITFLFAALVLFAAFEAPTMVEA. Position 30 is a pyrrolidone carboxylic acid (Gln-30). Cystine bridges form between Cys-33-Cys-80, Cys-44-Cys-65, Cys-50-Cys-74, and Cys-54-Cys-76.

Belongs to the DEFL family.

Its subcellular location is the secreted. Its function is as follows. Confers broad-spectrum resistance to pathogens. This is Defensin-like protein 17 (PDF1.2C) from Arabidopsis thaliana (Mouse-ear cress).